The primary structure comprises 739 residues: Alcohol dehydrogenase (quinone), dehydrogenase subunit (739 aa).

The N-terminal stretch at 1 to 35 is a signal peptide; that stretch reads MISAVFGKRRSLSRTLTAGTICAALISGYATMASA. Glu-97 is a pyrroloquinoline quinone binding site. Residues Cys-143 and Cys-144 are joined by a disulfide bond. Arg-149 contacts pyrroloquinoline quinone. Residue Glu-217 participates in Ca(2+) binding. Residue Thr-279 coordinates pyrroloquinoline quinone. 2 residues coordinate Ca(2+): Asn-299 and Asp-344. Catalysis depends on Asp-344, which acts as the Proton acceptor. Pyrroloquinoline quinone contacts are provided by Lys-371 and Ile-585. The region spanning 635–739 is the Cytochrome c domain; sequence FDSKRTDNGY…NADGIPEQLP (105 aa). The heme c site is built by Cys-651, Cys-654, His-655, and Met-694.

The protein belongs to the bacterial PQQ dehydrogenase family. As to quaternary structure, the alcohol dehydrogenase multicomponent enzyme system is composed of a dehydrogenase subunit I (AdhA) and a cytochrome c subunit II (AdhB). Requires pyrroloquinoline quinone as cofactor. The cofactor is Ca(2+). Heme c serves as cofactor.

Its subcellular location is the cell membrane. The catalysed reaction is ethanol + a ubiquinone = a ubiquinol + acetaldehyde. Its function is as follows. Dehydrogenase component of the alcohol dehydrogenase multicomponent enzyme system which is involved in the production of acetic acid and in the ethanol oxidase respiratory chain. Quinohemoprotein alcohol dehydrogenase (ADH) catalyzes the oxidation of ethanol to acetaldehyde by transferring electrons to the ubiquinone embedded in the membrane phospholipids. The electrons transfer from ethanol to membranous ubiquinone occurs from pyrroloquinoline quinone (PQQ) to one heme c in subunit I (AdhA), and finally to two heme c in subunit II (AdhB). Besides ubiquinone reduction, ADH also has a ubiquinol (QH2) oxidation reaction which mediates electron transfer from ubiquinol to the non-energy generating bypass oxidase system. The electrons transfer occurs from ubiquinol (QH2) to the additional heme c within subunit II (AdhB). The chain is Alcohol dehydrogenase (quinone), dehydrogenase subunit from Komagataeibacter europaeus (Gluconacetobacter europaeus).